The primary structure comprises 392 residues: Chloramphenicol resistance protein (392 aa).

12 helical membrane-spanning segments follow: residues 6–26 (YLLA…AGLV), 42–62 (TLTS…AALA), 71–91 (LLGF…TTSF), 100–120 (VAAL…AALV), 129–149 (LAVL…GGSL), 160–180 (FWAV…AIPA), 205–225 (LLLA…SFTF), 239–259 (LWIS…VTVA), 268–288 (AQVL…LAML), 294–314 (ALLT…STLI), 332–352 (ATAA…TTLG), and 358–378 (LGPL…AFPF).

It belongs to the major facilitator superfamily.

It is found in the cell membrane. The sequence is that of Chloramphenicol resistance protein (cmlR) from Streptomyces lividans.